The sequence spans 259 residues: uncharacterized protein (259 aa).

This sequence belongs to the BtpA family.

This is an uncharacterized protein from Pyrococcus horikoshii (strain ATCC 700860 / DSM 12428 / JCM 9974 / NBRC 100139 / OT-3).